A 735-amino-acid polypeptide reads, in one-letter code: MSGFDDLGIYYSDSFGGEQPVGDDGQAKKSQLKKRFREFLRQYRVGTDRTGFTFKYRDELKRHYNLGEYWIEVEMEDLASFDEDLADYLYKQPTEHLQLLEEAAQEVADEVTRPRPAGEETIQEIQVMLRSDANPANIRSLKSEQMSHLVKIPGIIIAATAVRAKATKISIQCRSCRNTIGNIAVRPGLEGYAMPRKCNTEQAGRPKCPLDPYFIIPDKCKCVDFQTLKLQESPDAVPHGELPRHMQLYCDRYLCDKVVPGNRVTIMGIYSIRKSGKTSTKGRDRVGVGIRSSYIRVVGIQVDTEGTGRSAAGAITPQEEEEFRRLSAKPDIYETVAKSIAPSIYGSSDIKKAIACLLFGGSRKRLPDGLTRRGDVNLLMLGDPGTAKSQLLKFVERCSPIGVYTSGKGSSAAGLTASVMRDPVSRNFIMEGGAMVLADGGVVCIDEFDKMREDDRVAIHEAMEQQTISIAKAGITTTLNSRCSVLAAANSVYGRWDDTKGEENIDFMPTILSRFDMIFIVKDEHNEQRDMTLAKHVMNVHLSARTQSSSVEGEIDLNTLKKYIAYCRAKCGPRLSAESAEKLKNRYILMRSGARDHERETEKRSSIPITVRQLEAIVRISESLGKMKLQPFATETDVEEALRLFQVSTLDAAMSGSLSGVEGFTTQEDQEMLSRIEKQLKRRFAIGSQVSEHSIIQDFLKQKYPEHAIHKVLHLMMRRGEIQHRLQRKVLYRIK.

The 207-residue stretch at 332–538 (IYETVAKSIA…RDMTLAKHVM (207 aa)) folds into the MCM domain. Arg372 serves as a coordination point for ADP. The Arginine finger motif lies at 513-516 (SRFD).

It belongs to the MCM family. In terms of assembly, component of the mcm2-7 complex (RLF-M). The complex forms a toroidal hexameric ring with the proposed subunit order mcm2-mcm6-mcm4-mcm7-mcm3-mcm5. The heterodimer of mmcm3/mcm5 interacts with mcm4, mmcm6, mcm7 and weakly with mcm2. Component of the CMG helicase complex, composed of the mcm2-7 complex, the GINS complex and cdc45.

The protein resides in the nucleus. It is found in the chromosome. It carries out the reaction ATP + H2O = ADP + phosphate + H(+). Functionally, acts as a component of the MCM2-7 complex (MCM complex) which is the replicative helicase essential for 'once per cell cycle' DNA replication initiation and elongation in eukaryotic cells. Core component of CDC45-MCM-GINS (CMG) helicase, the molecular machine that unwinds template DNA during replication, and around which the replisome is built. The active ATPase sites in the MCM2-7 ring are formed through the interaction surfaces of two neighboring subunits such that a critical structure of a conserved arginine finger motif is provided in trans relative to the ATP-binding site of the Walker A box of the adjacent subunit. The six ATPase active sites, however, are likely to contribute differentially to the complex helicase activity. This Xenopus tropicalis (Western clawed frog) protein is DNA replication licensing factor mcm5.